We begin with the raw amino-acid sequence, 286 residues long: ATP synthase gamma chain (286 aa).

It belongs to the ATPase gamma chain family. As to quaternary structure, F-type ATPases have 2 components, CF(1) - the catalytic core - and CF(0) - the membrane proton channel. CF(1) has five subunits: alpha(3), beta(3), gamma(1), delta(1), epsilon(1). CF(0) has three main subunits: a, b and c.

It localises to the cell membrane. In terms of biological role, produces ATP from ADP in the presence of a proton gradient across the membrane. The gamma chain is believed to be important in regulating ATPase activity and the flow of protons through the CF(0) complex. This is ATP synthase gamma chain from Ureaplasma urealyticum serovar 10 (strain ATCC 33699 / Western).